A 347-amino-acid chain; its full sequence is NADH-ubiquinone oxidoreductase chain 2 (347 aa).

The next 10 membrane-spanning stretches (helical) occupy residues 13–33 (IVLG…WMGF), 59–79 (YFLT…INLV), 96–116 (IIMT…FWVP), 122–142 (ISLL…LSVL), 144–164 (VISP…SILI), 178–200 (ILAY…NPMM), 210–232 (LMTA…ALSH), 246–266 (IIML…KWMI), 276–296 (IILA…YMRL), and 326–346 (LPML…MILL).

Belongs to the complex I subunit 2 family. In terms of assembly, core subunit of respiratory chain NADH dehydrogenase (Complex I) which is composed of 45 different subunits. Interacts with TMEM242.

The protein localises to the mitochondrion inner membrane. It carries out the reaction a ubiquinone + NADH + 5 H(+)(in) = a ubiquinol + NAD(+) + 4 H(+)(out). Functionally, core subunit of the mitochondrial membrane respiratory chain NADH dehydrogenase (Complex I) which catalyzes electron transfer from NADH through the respiratory chain, using ubiquinone as an electron acceptor. Essential for the catalytic activity and assembly of complex I. The protein is NADH-ubiquinone oxidoreductase chain 2 of Rhynchonycteris naso (Brazilian long-nosed bat).